Here is a 142-residue protein sequence, read N- to C-terminus: Putative pre-16S rRNA nuclease (142 aa).

Belongs to the YqgF nuclease family.

It is found in the cytoplasm. In terms of biological role, could be a nuclease involved in processing of the 5'-end of pre-16S rRNA. This Nitratidesulfovibrio vulgaris (strain DP4) (Desulfovibrio vulgaris) protein is Putative pre-16S rRNA nuclease.